The primary structure comprises 251 residues: Probable transcriptional regulatory protein PMI1113 (251 aa).

The protein belongs to the TACO1 family.

It localises to the cytoplasm. In Proteus mirabilis (strain HI4320), this protein is Probable transcriptional regulatory protein PMI1113.